Reading from the N-terminus, the 341-residue chain is Methionine import ATP-binding protein MetN 2 (341 aa).

The 240-residue stretch at 2 to 241 folds into the ABC transporter domain; that stretch reads IELKEVVKEY…PQHAVTKRFV (240 aa). 38–45 provides a ligand contact to ATP; the sequence is GFSGAGKS.

Belongs to the ABC transporter superfamily. Methionine importer (TC 3.A.1.24) family. In terms of assembly, the complex is composed of two ATP-binding proteins (MetN), two transmembrane proteins (MetI) and a solute-binding protein (MetQ).

It localises to the cell membrane. It catalyses the reaction L-methionine(out) + ATP + H2O = L-methionine(in) + ADP + phosphate + H(+). The enzyme catalyses D-methionine(out) + ATP + H2O = D-methionine(in) + ADP + phosphate + H(+). Its function is as follows. Part of the ABC transporter complex MetNIQ involved in methionine import. Responsible for energy coupling to the transport system. The sequence is that of Methionine import ATP-binding protein MetN 2 from Staphylococcus aureus (strain MRSA252).